A 367-amino-acid polypeptide reads, in one-letter code: Alanine racemase (367 aa).

Lys34 functions as the Proton acceptor; specific for D-alanine in the catalytic mechanism. Lys34 is modified (N6-(pyridoxal phosphate)lysine). Substrate is bound at residue Arg129. Tyr251 acts as the Proton acceptor; specific for L-alanine in catalysis. Met299 is a substrate binding site.

This sequence belongs to the alanine racemase family. Requires pyridoxal 5'-phosphate as cofactor.

It carries out the reaction L-alanine = D-alanine. Its pathway is amino-acid biosynthesis; D-alanine biosynthesis; D-alanine from L-alanine: step 1/1. Catalyzes the interconversion of L-alanine and D-alanine. May also act on other amino acids. The sequence is that of Alanine racemase (alr) from Thiobacillus denitrificans (strain ATCC 25259 / T1).